The following is a 380-amino-acid chain: Protein trichome birefringence-like 38 (380 aa).

The chain crosses the membrane as a helical; Signal-anchor for type II membrane protein span at residues S7–A29. Residues G134 to S136 carry the GDS motif motif. The DCXHWCLPGXXDXWN motif motif lies at D357–N371.

It belongs to the PC-esterase family. TBL subfamily.

It is found in the membrane. Its function is as follows. May act as a bridging protein that binds pectin and other cell wall polysaccharides. Probably involved in maintaining esterification of pectins. May be involved in the specific O-acetylation of cell wall polymers. This is Protein trichome birefringence-like 38 (TBL38) from Arabidopsis thaliana (Mouse-ear cress).